Reading from the N-terminus, the 910-residue chain is Leucine--tRNA ligase (910 aa).

The 'HIGH' region signature appears at 42–52 (PYPSGKLHMGH). The 'KMSKS' region signature appears at 658–662 (TMSKS). An ATP-binding site is contributed by lysine 661.

The protein belongs to the class-I aminoacyl-tRNA synthetase family.

It is found in the cytoplasm. The enzyme catalyses tRNA(Leu) + L-leucine + ATP = L-leucyl-tRNA(Leu) + AMP + diphosphate. This Acidovorax ebreus (strain TPSY) (Diaphorobacter sp. (strain TPSY)) protein is Leucine--tRNA ligase.